The chain runs to 312 residues: Malate dehydrogenase (312 aa).

NAD(+) contacts are provided by residues 12–17 (GAGFTG) and aspartate 36. Residues arginine 87 and arginine 93 each contribute to the substrate site. NAD(+)-binding positions include asparagine 100 and 123 to 125 (LTN). Substrate is bound at residue asparagine 125. Phosphoserine is present on serine 149. A substrate-binding site is contributed by arginine 156. The active-site Proton acceptor is histidine 180.

The protein belongs to the LDH/MDH superfamily. MDH type 3 family.

The enzyme catalyses (S)-malate + NAD(+) = oxaloacetate + NADH + H(+). In terms of biological role, catalyzes the reversible oxidation of malate to oxaloacetate. This is Malate dehydrogenase from Bacillus licheniformis (strain ATCC 14580 / DSM 13 / JCM 2505 / CCUG 7422 / NBRC 12200 / NCIMB 9375 / NCTC 10341 / NRRL NRS-1264 / Gibson 46).